A 228-amino-acid chain; its full sequence is UPF0758 protein NT01CX_1687 (228 aa).

Residues 106 to 228 (IIKSPGDVAG…YISLKEKNIL (123 aa)) form the MPN domain. Positions 177, 179, and 190 each coordinate Zn(2+). The JAMM motif signature appears at 177 to 190 (HNHPSGDPTPSSED).

Belongs to the UPF0758 family.

The sequence is that of UPF0758 protein NT01CX_1687 from Clostridium novyi (strain NT).